Consider the following 436-residue polypeptide: Drebrin-like protein (436 aa).

The region spanning 2–133 is the ADF-H domain; the sequence is AVNLSRNGPA…EPECIMEKVA (132 aa). The residue at position 26 (T26) is a Phosphothreonine. S160 is subject to Phosphoserine. N6-acetyllysine is present on K176. A coiled-coil region spans residues 178 to 232; that stretch reads NFWAKAEKEEENRRLEEKRRAEEEKQRLEEERRERELQEAARREQRYQEQHRSAG. Composition is skewed to basic and acidic residues over residues 185–229 and 264–275; these read KEEE…EQHR and HPREIFKQKERA. A disordered region spans residues 185–371; it reads KEEENRRLEE…GSGHIDNYMQ (187 aa). A compositionally biased stretch (polar residues) spans 276–286; that stretch reads MSTTSVSSSQP. Phosphoserine occurs at positions 277, 280, 283, and 291. N6-acetyllysine is present on K296. Phosphothreonine is present on T299. Position 311 is a phosphoserine (S311). Phosphotyrosine is present on residues Y340 and Y350. Positions 377 to 436 constitute an SH3 domain; that stretch reads GQGLCARALYDYQAADDTEISFDPENLITGIEVIDEGWWRGYGPDGHFGMFPANYVELIE.

This sequence belongs to the ABP1 family. In terms of assembly, interacts with FGD1, MAP4K1 and PRAM1. Interacts with ANKRD54. Interacts with WASL and WIPF1. Interacts with SHANK2 and SHANK3. Interacts with both COBL and PACSIN1. Interacts with DNM1 and SYN1. In terms of tissue distribution, detected in brain (at protein level). Widely expressed in brain with highest levels in hippocampus and cerebral cortex. Located primarily in dendrites and, in moderate amounts, in cell bodies. Isoform 1 and isoform 3 are the predominant isoforms in brain.

The protein localises to the cytoplasm. It is found in the cytoskeleton. The protein resides in the cell projection. Its subcellular location is the lamellipodium. It localises to the ruffle. The protein localises to the cell cortex. It is found in the cytosol. The protein resides in the cell membrane. Its subcellular location is the synapse. It localises to the perikaryon. The protein localises to the neuron projection. It is found in the dendrite. The protein resides in the postsynaptic density. Its subcellular location is the golgi apparatus membrane. It localises to the cytoplasmic vesicle. The protein localises to the clathrin-coated vesicle membrane. It is found in the podosome. The protein resides in the early endosome. Its function is as follows. Adapter protein that binds F-actin and DNM1, and thereby plays a role in receptor-mediated endocytosis. Required for the formation of organized podosome rosettes. May act as a common effector of antigen receptor-signaling pathways in leukocytes. Acts as a key component of the immunological synapse that regulates T-cell activation by bridging TCRs and the actin cytoskeleton to gene activation and endocytic processes. Plays a role in the reorganization of the actin cytoskeleton, formation of cell projections, such as neurites, in neuron morphogenesis and synapse formation via its interaction with WASL and COBL. Does not bind G-actin and promote actin polymerization by itself. The chain is Drebrin-like protein from Rattus norvegicus (Rat).